We begin with the raw amino-acid sequence, 383 residues long: Envelope glycoprotein D (383 aa).

The signal sequence occupies residues 1–30; the sequence is MPAATMATPGYLACRTSVATLLFFVLLRRA. Over 31 to 358 the chain is Virion surface; sequence AILGAGGAPS…PKVVGPTVGP (328 aa). Intrachain disulfides connect Cys-76/Cys-197, Cys-115/Cys-212, and Cys-127/Cys-136. Residues 244 to 311 are profusion; sequence YQDKLKVASP…TSASGVIEIE (68 aa). The segment at 315–349 is disordered; it reads ESDVRLVSYPPPTLPSPGPGGNENGAGYSDNRPDP. A compositionally biased stretch (pro residues) spans 323-332; sequence YPPPTLPSPG. A helical membrane pass occupies residues 359–379; sequence GAIILVVMCAPILIGLTAFTI. The Intravirion portion of the chain corresponds to 380 to 383; that stretch reads RKYC.

Belongs to the herpesviridae glycoprotein D family.

The protein resides in the virion membrane. Envelope glycoprotein that binds to host cell entry receptors, promoting the virus entry into host cells. May trigger fusion with host membrane, by recruiting the fusion machinery composed of gB and gH/gL. The chain is Envelope glycoprotein D (US6) from Amazona oratrix (yellow-headed parrot).